The chain runs to 65 residues: MAKKGTRIVVTLECTESRSVPSSEKRSAGVSRYTTEKNRRNTTERLELKKFCPELNKMTIHREIK.

The segment at 17–40 is disordered; the sequence is SRSVPSSEKRSAGVSRYTTEKNRR.

This sequence belongs to the bacterial ribosomal protein bL33 family.

This Prochlorococcus marinus (strain NATL1A) protein is Large ribosomal subunit protein bL33.